The chain runs to 1064 residues: Carbamoyl phosphate synthase pyrimidine-specific large chain (1064 aa).

Residues 1–401 (MPKRRDIETI…SLLKAVRSLE (401 aa)) are carboxyphosphate synthetic domain. 11 residues coordinate ATP: Arg129, Arg169, Gly175, Gly176, Arg208, Ile210, Gly241, Ile242, His243, Gln284, and Glu298. One can recognise an ATP-grasp 1 domain in the interval 133-327 (RALMNELGEP…IAKLAAKIAV (195 aa)). Mg(2+)-binding residues include Gln284, Glu298, and Asn300. Mn(2+)-binding residues include Gln284, Glu298, and Asn300. An oligomerization domain region spans residues 402 to 546 (IGVHHLELNE…YSTYEEENES (145 aa)). Residues 547–929 (IVTEKPSVIV…ALYKGLVASG (383 aa)) are carbamoyl phosphate synthetic domain. The ATP-grasp 2 domain occupies 671-861 (EQALSELGIP…MANLATKAIL (191 aa)). The ATP site is built by Arg707, Arg746, Ile748, Glu752, Gly777, Val778, His779, Ser780, Gln820, and Glu832. Residues Gln820, Glu832, and Asn834 each coordinate Mg(2+). Gln820, Glu832, and Asn834 together coordinate Mn(2+). The MGS-like domain maps to 930–1064 (IQIQPHGAVL…TAMTEGLVRS (135 aa)). Residues 930 to 1064 (IQIQPHGAVL…TAMTEGLVRS (135 aa)) are allosteric domain.

The protein belongs to the CarB family. Composed of two chains; the small (or glutamine) chain promotes the hydrolysis of glutamine to ammonia, which is used by the large (or ammonia) chain to synthesize carbamoyl phosphate. Tetramer of heterodimers (alpha,beta)4. Mg(2+) is required as a cofactor. Mn(2+) serves as cofactor.

The catalysed reaction is hydrogencarbonate + L-glutamine + 2 ATP + H2O = carbamoyl phosphate + L-glutamate + 2 ADP + phosphate + 2 H(+). It carries out the reaction hydrogencarbonate + NH4(+) + 2 ATP = carbamoyl phosphate + 2 ADP + phosphate + 2 H(+). It participates in amino-acid biosynthesis; L-arginine biosynthesis; carbamoyl phosphate from bicarbonate: step 1/1. It functions in the pathway pyrimidine metabolism; UMP biosynthesis via de novo pathway; (S)-dihydroorotate from bicarbonate: step 1/3. Small subunit of the glutamine-dependent carbamoyl phosphate synthetase (CPSase). CPSase catalyzes the formation of carbamoyl phosphate from the ammonia moiety of glutamine, carbonate, and phosphate donated by ATP, constituting the first step of the biosynthetic pathway leading to pyrimidine nucleotides. The large subunit (synthetase) binds the substrates ammonia (free or transferred from glutamine from the small subunit), hydrogencarbonate and ATP and carries out an ATP-coupled ligase reaction, activating hydrogencarbonate by forming carboxy phosphate which reacts with ammonia to form carbamoyl phosphate. This chain is Carbamoyl phosphate synthase pyrimidine-specific large chain (pyrAB), found in Geobacillus stearothermophilus (Bacillus stearothermophilus).